Reading from the N-terminus, the 245-residue chain is tRNA pseudouridine synthase A (245 aa).

D52 serves as the catalytic Nucleophile. Y111 contributes to the substrate binding site.

It belongs to the tRNA pseudouridine synthase TruA family. As to quaternary structure, homodimer.

The enzyme catalyses uridine(38/39/40) in tRNA = pseudouridine(38/39/40) in tRNA. Its function is as follows. Formation of pseudouridine at positions 38, 39 and 40 in the anticodon stem and loop of transfer RNAs. This chain is tRNA pseudouridine synthase A, found in Nitrobacter hamburgensis (strain DSM 10229 / NCIMB 13809 / X14).